We begin with the raw amino-acid sequence, 148 residues long: Calcium-permeable cation-selective channel WeiTsing (148 aa).

Residues M1–S25 are Cytoplasmic-facing. The chain crosses the membrane as a helical span at residues A26 to V46. Topologically, residues S47–S51 are lumenal. A helical transmembrane segment spans residues V52–V72. Over L73 to R90 the chain is Cytoplasmic. Residues L91–V110 form a helical membrane-spanning segment. The Lumenal portion of the chain corresponds to V111 to S116. Residues I117–L133 form a helical membrane-spanning segment. Over E134–V148 the chain is Cytoplasmic.

Forms pentamers with a central pore to produce an ion channel.

It localises to the endoplasmic reticulum membrane. The enzyme catalyses Ca(2+)(in) = Ca(2+)(out). It carries out the reaction Na(+)(in) = Na(+)(out). Its function is as follows. Calcium-permeable cation-selective channel conferring a broad-spectrum clubroot resistance by supporting cytosolic Ca(2+) increase in root pericycle cells. Triggers immunity toward fungal pathogens such as Plasmodiophora brassicae (Pb) and induces defenses. Also permeable to sodium ion Na(+) and possibly other cations. The chain is Calcium-permeable cation-selective channel WeiTsing from Arabidopsis thaliana (Mouse-ear cress).